Here is a 484-residue protein sequence, read N- to C-terminus: Aspartyl/glutamyl-tRNA(Asn/Gln) amidotransferase subunit B (484 aa).

This sequence belongs to the GatB/GatE family. GatB subfamily. In terms of assembly, heterotrimer of A, B and C subunits.

The catalysed reaction is L-glutamyl-tRNA(Gln) + L-glutamine + ATP + H2O = L-glutaminyl-tRNA(Gln) + L-glutamate + ADP + phosphate + H(+). It carries out the reaction L-aspartyl-tRNA(Asn) + L-glutamine + ATP + H2O = L-asparaginyl-tRNA(Asn) + L-glutamate + ADP + phosphate + 2 H(+). In terms of biological role, allows the formation of correctly charged Asn-tRNA(Asn) or Gln-tRNA(Gln) through the transamidation of misacylated Asp-tRNA(Asn) or Glu-tRNA(Gln) in organisms which lack either or both of asparaginyl-tRNA or glutaminyl-tRNA synthetases. The reaction takes place in the presence of glutamine and ATP through an activated phospho-Asp-tRNA(Asn) or phospho-Glu-tRNA(Gln). In Cupriavidus metallidurans (strain ATCC 43123 / DSM 2839 / NBRC 102507 / CH34) (Ralstonia metallidurans), this protein is Aspartyl/glutamyl-tRNA(Asn/Gln) amidotransferase subunit B.